The primary structure comprises 152 residues: Small ribosomal subunit protein bS6 (152 aa).

Residues 96 to 152 (HEEGPSAMLQKRDRDDRGERGDRGDRGDRGDRGFGGREDRPRRPRPTEESHGGEEEV) are disordered.

Belongs to the bacterial ribosomal protein bS6 family.

Binds together with bS18 to 16S ribosomal RNA. The protein is Small ribosomal subunit protein bS6 of Xanthobacter autotrophicus (strain ATCC BAA-1158 / Py2).